The sequence spans 458 residues: Ammonium transporter Rh type B (458 aa).

Residues 1-13 lie on the Cytoplasmic side of the membrane; that stretch reads MAGSPSRAAGRRL. The chain crosses the membrane as a helical span at residues 14–34; sequence QLPLLCLFLQGATAVLFAVFV. The Extracellular portion of the chain corresponds to 35–61; that stretch reads RYNHKTDAALWHRGNYSNADNEFYFRY. The N-linked (GlcNAc...) asparagine glycan is linked to asparagine 49. The helical transmembrane segment at 62-82 threads the bilayer; sequence PSFQDVHAMVFVGFGFLMVFL. The Cytoplasmic portion of the chain corresponds to 83–86; the sequence is QRYG. Residues 87–107 traverse the membrane as a helical segment; the sequence is FSSVGFTFLLAAFALQWSTLV. Residues 108-124 lie on the Extracellular side of the membrane; the sequence is QGFLHSFHSGHIHVGVE. A helical transmembrane segment spans residues 125 to 145; sequence SMINADFCAGAVLISFGAVLG. At 146–149 the chain is on the cytoplasmic side; it reads KTGP. A helical transmembrane segment spans residues 150–170; that stretch reads AQLLLMALLEVVLFGINEFVL. Residues 171-178 are Extracellular-facing; that stretch reads LHLLGVRD. Residues 179–201 traverse the membrane as a helical segment; it reads AGGSMTIHTFGAYFGLVLSRVLY. Residues 202-219 are Cytoplasmic-facing; that stretch reads RPQLEKSKHRQGSVYHSD. A helical transmembrane segment spans residues 220-240; that stretch reads LFAMIGTIFLWIFWPSFNSAL. Residues 241-251 are Extracellular-facing; it reads TALGAGQHRTA. The helical transmembrane segment at 252–272 threads the bilayer; the sequence is LNTYYSLAASTLGTFALSALV. Over 273 to 282 the chain is Cytoplasmic; that stretch reads GEDGRLDMVH. A helical membrane pass occupies residues 283–303; sequence IQNAALAGGVVVGTSSEMMLT. Proline 304 is a topological domain (extracellular). The helical transmembrane segment at 305–325 threads the bilayer; that stretch reads FGALAAGFLAGTVSTLGYKFF. The Cytoplasmic portion of the chain corresponds to 326–346; the sequence is TPILESKFKVQDTCGVHNLHG. A helical transmembrane segment spans residues 347–367; that stretch reads MPGVLGALLGVLVAGLATHEA. The Extracellular portion of the chain corresponds to 368 to 393; that stretch reads YGDGLESVFPLIAEGQRSATSQAMLQ. A helical transmembrane segment spans residues 394-414; that stretch reads LFGLFVTLMFASVGGGLGGLL. The Cytoplasmic portion of the chain corresponds to 415 to 458; sequence LKLPFLDSPPDSQCYEDQVHWQVPGEHEDEAQRPLRVEEADTQA. An interaction with ANK3 region spans residues 416–424; the sequence is KLPFLDSPP. A Basolateral sorting signal motif is present at residues 429–432; the sequence is YEDQ. The disordered stretch occupies residues 439–458; the sequence is GEHEDEAQRPLRVEEADTQA. A compositionally biased stretch (basic and acidic residues) spans 444-458; that stretch reads EAQRPLRVEEADTQA.

Belongs to the ammonium transporter (TC 2.A.49) family. Rh subfamily. Interacts (via C-terminus) with ANK2 and ANK3; required for targeting to the basolateral membrane. In terms of processing, N-glycosylated.

It is found in the cell membrane. The protein localises to the basolateral cell membrane. It carries out the reaction NH4(+)(in) = NH4(+)(out). The enzyme catalyses methylamine(out) = methylamine(in). It catalyses the reaction CO2(out) = CO2(in). Ammonium transporter involved in the maintenance of acid-base homeostasis. Transports ammonium and its related derivative methylammonium across the basolateral plasma membrane of epithelial cells likely contributing to renal transepithelial ammonia transport and ammonia metabolism. May transport either NH4(+) or NH3 ammonia species predominantly mediating an electrogenic NH4(+) transport. May act as a CO2 channel providing for renal acid secretion. This chain is Ammonium transporter Rh type B (RHBG), found in Papio hamadryas (Hamadryas baboon).